The chain runs to 182 residues: Plasmolipin (182 aa).

Positions 1-20 (MAEFPSKVSTRTSSPAQGVG) are disordered. Residues 1–35 (MAEFPSKVSTRTSSPAQGVGASVSAMRPDLGFVRS) lie on the Cytoplasmic side of the membrane. The span at 7–16 (KVSTRTSSPA) shows a compositional bias: polar residues. Residue Ser-9 is modified to Phosphoserine. Residues 32-166 (FVRSALGVLA…SAFFSFQAWR (135 aa)) enclose the MARVEL domain. A helical membrane pass occupies residues 36-56 (ALGVLALLQLVLGLLVWALIA). Residues 57-68 (DTPYHLYPAYGW) are Extracellular-facing. Residues 69 to 89 (VMFVAVFLWLVTIVFFIIYLF) form a helical membrane-spanning segment. At 90–99 (QLHMKLYMVP) the chain is on the cytoplasmic side. Residues 100–120 (WPLVLLVFFVAATVLYITAFV) form a helical membrane-spanning segment. The Extracellular segment spans residues 121–141 (ACAAAVDLTSLRGSRPYNQRS). The helical transmembrane segment at 142–162 (AASFFACLVMIAYGLSAFFSF) threads the bilayer. At 163–182 (QAWRGVGSNAATSQMAGGYS) the chain is on the cytoplasmic side.

It belongs to the MAL family. In terms of assembly, forms oligomers. Post-translationally, phosphorylated. In terms of tissue distribution, detected to the sciatic nerve, brain and kidney. In the sciatic nerve, found in Schwann cells; in the brain, in developing oligodendrocytes, especially of the corpus callosum, of cortical white matter, in the optic nerve and in the stratum radiatum and stratum oriens of the hippocampus. In kidney, segregated to the apical surface of renal tubular epithelia.

The protein localises to the cell membrane. It is found in the myelin membrane. The protein resides in the apical cell membrane. In terms of biological role, main component of the myelin sheath that plays an important role in myelin membrane biogenesis and myelination. Plays an essential function in apical endocytosis. Regulates epithelial development through the regulation of apical endocytosis. Part of the intracellular machinery that mediates basolateral-to-apical transport of ICAM-1, an essential adhesion receptor in epithelial cells, from the subapical compartment in hepatic epithelial cells. The protein is Plasmolipin (Pllp) of Rattus norvegicus (Rat).